Reading from the N-terminus, the 782-residue chain is General transcription and DNA repair factor IIH helicase/translocase subunit XPB (782 aa).

Residues 1-11 are compositionally biased toward basic and acidic residues; the sequence is MGKRDRADRDK. 2 disordered regions span residues 1 to 51 and 218 to 241; these read MGKR…ESGT and SAIS…PQGK. The Nuclear localization signal signature appears at 6–18; that stretch reads RADRDKKKSRKRH. Over residues 21 to 30 the composition is skewed to acidic residues; the sequence is DEEDDEEDAP. Over residues 218–236 the composition is skewed to polar residues; the sequence is SAISKTAESSGGPSTSRVT. In terms of domain architecture, Helicase ATP-binding spans 327 to 488; that stretch reads MFGNGRARSG…DLNFLIGPKL (162 aa). 340-347 is a binding site for ATP; it reads LPCGAGKS. The short motif at 441–444 is the DEVH box element; the sequence is DEVH. One can recognise a Helicase C-terminal domain in the interval 542 to 702; sequence RACQFLIKFH…LAGMEEEDLA (161 aa). Serine 686 carries the phosphoserine modification. A Phosphoserine; by CK2 modification is found at serine 751.

It belongs to the helicase family. RAD25/XPB subfamily. As to quaternary structure, component of the 7-subunit TFIIH core complex composed of XPB/ERCC3, XPD/ERCC2, GTF2H1, GTF2H2, GTF2H3, GTF2H4 and GTF2H5, which is active in NER. The core complex associates with the 3-subunit CDK-activating kinase (CAK) module composed of CCNH/cyclin H, CDK7 and MNAT1 to form the 10-subunit holoenzyme (holo-TFIIH) active in transcription. Interacts with PUF60. Interacts with ATF7IP. Interacts with KAT2A; leading to KAT2A recruitment to promoters and acetylation of histones. Part of TBP-based Pol II pre-initiation complex (PIC), in which Pol II core assembles with general transcription factors and other specific initiation factors including GTF2E1, GTF2E2, GTF2F1, GTF2F2, TCEA1, ERCC2, ERCC3, GTF2H2, GTF2H3, GTF2H4, GTF2H5, GTF2A1, GTF2A2, GTF2B and TBP; this large multi-subunit PIC complex mediates DNA unwinding and targets Pol II core to the transcription start site where the first phosphodiester bond forms. Post-translationally, phosphorylation on Ser-751 by CK2 controls the 5'-excision activity of ERCC1-XPF endonuclease; phosphorylated protein inhibits the excision activity and thus NER. Dephosphorylation reactivates the 5'-excision step. Phosphorylation has no effect on transcription or the 3'-5' helicase activity.

It is found in the nucleus. The enzyme catalyses Couples ATP hydrolysis with the unwinding of duplex DNA by translocating in the 3'-5' direction.. The catalysed reaction is ATP + H2O = ADP + phosphate + H(+). With respect to regulation, phosphorylation on Ser-751 by CK2 controls the 5'-excision activity of ERCC1-XPF endonuclease; phosphorylated protein inhibits the excision activity and thus NER. ATPase activity is stimulated by TFIIH subunit p52 (GTF2H4). DNA translocase activity by this subunit in TFIIH is stimulated by XPA, ERCC5/XPG and XFP plus ERCC1. In terms of biological role, ATP-dependent 3'-5' DNA helicase/translocase; binds dsDNA rather than ssDNA, unzipping it in a translocase rather than classical helicase activity. Component of the general transcription and DNA repair factor IIH (TFIIH) core complex. When complexed to CDK-activating kinase (CAK), involved in RNA transcription by RNA polymerase II. The ATPase activity of XPB/ERCC3, but not its helicase activity, is required for DNA opening; it may wrap around the damaged DNA wedging it open, causing localized melting and twisting that allows XPD/ERCC2 helicase to anchor. The ATP-dependent helicase activity of XPB/ERCC3 may be required for promoter escape. Also involved in transcription-coupled nucleotide excision repair (NER) of damaged DNA. In NER, TFIIH acts by opening DNA around the lesion to allow the excision of the damaged oligonucleotide and its replacement by a new DNA fragment. The structure of the TFIIH transcription complex differs from the NER-TFIIH complex; large movements by XPD/ERCC2 and XPB/ERCC3 are stabilized by XPA. The protein is General transcription and DNA repair factor IIH helicase/translocase subunit XPB (ERCC3) of Pongo abelii (Sumatran orangutan).